The primary structure comprises 132 residues: Small ribosomal subunit protein uS8 (132 aa).

The protein belongs to the universal ribosomal protein uS8 family. As to quaternary structure, part of the 30S ribosomal subunit. Contacts proteins S5 and S12.

Functionally, one of the primary rRNA binding proteins, it binds directly to 16S rRNA central domain where it helps coordinate assembly of the platform of the 30S subunit. This Ehrlichia ruminantium (strain Welgevonden) protein is Small ribosomal subunit protein uS8.